The chain runs to 345 residues: Variable large protein 23 (345 aa).

An N-terminal signal peptide occupies residues 1–18 (MRKRISAIIMTLFMVLVS). C19 is lipidated: N-palmitoyl cysteine. C19 carries the S-diacylglycerol cysteine lipid modification.

The protein belongs to the variable large protein (Vlp) family. Delta subfamily.

It is found in the cell outer membrane. Functionally, the Vlp and Vsp proteins are antigenically distinct proteins, only one vlp or vsp gene is transcriptionally active at any one time. Switching between these genes is a mechanism of host immune response evasion. This is Variable large protein 23 from Borrelia hermsii.